A 246-amino-acid chain; its full sequence is MSRGTGAGYDRHITIFSPEGRLYQVEYAFKAVKSAGVTSIGVRGKDSVCVVTQKKVPDKLLDHTSVTHLFPITKYIGLLATGLTADARSLVYQARNEAAEFRFKWGYEMPVDVLAKWIADKAQVYTQHAYMRPLGVVAMVLGYDEEKNAQLFKCDPAGHFFGHKATSAGLKEQEAINFLEKKMKDDPQFSYEETVQIAISALQSVLQEDFKATEIEVGVVRKDDRVFRALTTEEIDQHLTAISERD.

Belongs to the peptidase T1A family. The 26S proteasome consists of a 20S proteasome core and two 19S regulatory subunits. The 20S proteasome core is composed of 28 subunits that are arranged in four stacked rings, resulting in a barrel-shaped structure. The two end rings are each formed by seven alpha subunits, and the two central rings are each formed by seven beta subunits. The catalytic chamber with the active sites is on the inside of the barrel.

The protein resides in the cytoplasm. Its subcellular location is the nucleus. Functionally, the proteasome is a multicatalytic proteinase complex which is characterized by its ability to cleave peptides with Arg, Phe, Tyr, Leu, and Glu adjacent to the leaving group at neutral or slightly basic pH. The proteasome has an ATP-dependent proteolytic activity. The sequence is that of Proteasome subunit alpha type-6 (PAA1) from Oryza sativa subsp. japonica (Rice).